A 459-amino-acid polypeptide reads, in one-letter code: Cyclooctat-9-en-7-ol 5-monooxygenase (459 aa).

Residues 1–27 are disordered; the sequence is MRERGPVTPAKSSAPPERPWTTGTAPG. Heme is bound at residue Cys-408.

The protein belongs to the cytochrome P450 family. Heme serves as cofactor.

It carries out the reaction cyclooctat-9-en-7-ol + AH2 + O2 = cyclooctat-9-ene-5,7-diol + A + H2O. In terms of biological role, involved in the biosynthesis of cyclooctatin, a potent inhibitor of lysophospholipase. Catalyzes the stereospecific hydroxylation of cyclooctat-9-en-7-ol to form cyclooctat-9-ene-5,7-diol. The polypeptide is Cyclooctat-9-en-7-ol 5-monooxygenase (Streptomyces melanosporofaciens).